The chain runs to 253 residues: Small ribosomal subunit protein uS2 (253 aa).

At serine 2 the chain carries N-acetylserine. The segment at 212–253 is disordered; the sequence is QQAAEEAAAGEEDDEAKEEVAAEEQTEAADWAEGQSEEVASW. The segment covering 219 to 238 has biased composition (acidic residues); the sequence is AAGEEDDEAKEEVAAEEQTE.

Belongs to the universal ribosomal protein uS2 family. As to quaternary structure, component of the small ribosomal subunit. Mature ribosomes consist of a small (40S) and a large (60S) subunit. The 40S subunit contains about 33 different proteins and 1 molecule of RNA (18S). The 60S subunit contains about 49 different proteins and 3 molecules of RNA (25S, 5.8S and 5S). Interacts with RPS21.

Its subcellular location is the cytoplasm. Its function is as follows. Required for the assembly and/or stability of the 40S ribosomal subunit. Required for the processing of the 20S rRNA-precursor to mature 18S rRNA in a late step of the maturation of 40S ribosomal subunits. In Eremothecium gossypii (strain ATCC 10895 / CBS 109.51 / FGSC 9923 / NRRL Y-1056) (Yeast), this protein is Small ribosomal subunit protein uS2.